Here is a 1030-residue protein sequence, read N- to C-terminus: Halotolerance protein 9 (1030 aa).

The segment at residues 136-166 (CDHCRKRKIRCDEVDQQTKKCSNCIKFQLPC) is a DNA-binding region (zn(2)-C6 fungal-type). Residues 185 to 208 (HHATPGESLQTSNSISNPVASSSV) form a disordered region. The segment covering 196 to 208 (SNSISNPVASSSV) has biased composition (low complexity). Phosphoserine occurs at positions 221 and 937.

It is found in the cytoplasm. It localises to the nucleus. Putative transcription factor involved in halotolerance. This is Halotolerance protein 9 (HAL9) from Saccharomyces cerevisiae (strain ATCC 204508 / S288c) (Baker's yeast).